A 313-amino-acid chain; its full sequence is MVVTEYELKPQNFPRFPLDWSEIFGRKAKIVVEIGFGNGEFLAELARRHPEKDFVGFEVSITSFVKAQKKFKRYNLKNVRLVKVDARFGLRELFPDNSVEKVYINFPCPWPKKRHESRRITSYDFLQTLSAVLEMDGTVEFATDEEWYAREVLDTFESSEYFVVDVFEENFKRDVETRYERKWKSQGKKTFLIVARKVKNGTVKRLMEGENTMAHSVFEGNVTWEKLKELEGKVFKDKNKIFVVKKVYRDGDYLLKVISTDEGGFQQVYYLNLSGRDGKWVLKLDEGSDPYRTPALKWSLRRIPEELTAQGSP.

S-adenosyl-L-methionine is bound by residues E33, E58, and D85. Substrate is bound by residues K112, D144, and 177 to 180; that span reads TRYE.

Belongs to the class I-like SAM-binding methyltransferase superfamily. TrmB family.

It catalyses the reaction guanosine(46) in tRNA + S-adenosyl-L-methionine = N(7)-methylguanosine(46) in tRNA + S-adenosyl-L-homocysteine. The protein operates within tRNA modification; N(7)-methylguanine-tRNA biosynthesis. Its function is as follows. Catalyzes the formation of N(7)-methylguanine at position 46 (m7G46) in tRNA. The protein is tRNA (guanine-N(7)-)-methyltransferase of Thermotoga maritima (strain ATCC 43589 / DSM 3109 / JCM 10099 / NBRC 100826 / MSB8).